A 353-amino-acid polypeptide reads, in one-letter code: UPF0421 protein YgaE (353 aa).

The next 4 membrane-spanning stretches (helical) occupy residues 20 to 40, 67 to 87, 103 to 123, and 125 to 145; these read LASWIGLPAPIFAGIAAIFAI, VFGLIFGPSPIMIGLTAVIVI, LVTVIAILESAGDDFLMFALI, and TSTVILGVLSSFIVNLVFLPP.

Belongs to the UPF0421 family.

The protein resides in the cell membrane. In Bacillus subtilis (strain 168), this protein is UPF0421 protein YgaE (ygaE).